The chain runs to 278 residues: Small ribosomal subunit biogenesis GTPase RsgA (278 aa).

Positions 62–218 (KNTLVRPKVV…ICDTPGFNVI (157 aa)) constitute a CP-type G domain. GTP contacts are provided by residues 112–115 (TKND) and 162–170 (GQSGVGKSS). Zn(2+)-binding residues include Cys-241, Cys-246, His-248, and Cys-254.

It belongs to the TRAFAC class YlqF/YawG GTPase family. RsgA subfamily. Monomer. Associates with 30S ribosomal subunit, binds 16S rRNA. It depends on Zn(2+) as a cofactor.

The protein resides in the cytoplasm. Functionally, one of several proteins that assist in the late maturation steps of the functional core of the 30S ribosomal subunit. Helps release RbfA from mature subunits. May play a role in the assembly of ribosomal proteins into the subunit. Circularly permuted GTPase that catalyzes slow GTP hydrolysis, GTPase activity is stimulated by the 30S ribosomal subunit. In Mycoplasma pneumoniae (strain ATCC 29342 / M129 / Subtype 1) (Mycoplasmoides pneumoniae), this protein is Small ribosomal subunit biogenesis GTPase RsgA.